The sequence spans 108 residues: MAPKKDKVPPPSSKPAKSGGGKQKKKKWSKGKQKEKVNNMVLFDQATYDKLLSEAPKFKLITPSILSDRLRINGSLARRAIRELMAKGTIRMVSAHSSQQIYTRATHG.

Positions Met-1–Lys-36 are disordered. Residues Lys-22–Gly-31 are compositionally biased toward basic residues.

Belongs to the eukaryotic ribosomal protein eS25 family.

The protein is Small ribosomal subunit protein eS25x (RPS25D) of Arabidopsis thaliana (Mouse-ear cress).